Consider the following 95-residue polypeptide: Large ribosomal subunit protein uL23 (95 aa).

It belongs to the universal ribosomal protein uL23 family. In terms of assembly, part of the 50S ribosomal subunit. Contacts protein L29, and trigger factor when it is bound to the ribosome.

Its function is as follows. One of the early assembly proteins it binds 23S rRNA. One of the proteins that surrounds the polypeptide exit tunnel on the outside of the ribosome. Forms the main docking site for trigger factor binding to the ribosome. This is Large ribosomal subunit protein uL23 from Desulforapulum autotrophicum (strain ATCC 43914 / DSM 3382 / VKM B-1955 / HRM2) (Desulfobacterium autotrophicum).